The chain runs to 137 residues: Glutaredoxin-C9 (137 aa).

One can recognise a Glutaredoxin domain in the interval 32–136; the sequence is GERVRMVVEE…PILKEVGALW (105 aa). A disulfide bridge connects residues Cys52 and Cys55. The short motif at 134 to 137 is the Responsive for interaction with TGA factors element; that stretch reads ALWL.

Belongs to the glutaredoxin family. CC-type subfamily. In terms of assembly, interacts with TGA2 and TGA6.

The protein resides in the cytoplasm. It is found in the nucleus. Functionally, has a glutathione-disulfide oxidoreductase activity in the presence of NADPH and glutathione reductase. Reduces low molecular weight disulfides and proteins. The protein is Glutaredoxin-C9 (GRXC9) of Arabidopsis thaliana (Mouse-ear cress).